The sequence spans 163 residues: Large ribosomal subunit protein uL15 (163 aa).

Residues 27-37 are compositionally biased toward gly residues; it reads SGLGKTAGRGQ. Residues 27–46 are disordered; the sequence is SGLGKTAGRGQKGQKSRSGV.

Belongs to the universal ribosomal protein uL15 family. In terms of assembly, part of the 50S ribosomal subunit.

Binds to the 23S rRNA. The chain is Large ribosomal subunit protein uL15 from Zymomonas mobilis subsp. mobilis (strain ATCC 31821 / ZM4 / CP4).